Consider the following 377-residue polypeptide: Succinyl-diaminopimelate desuccinylase (377 aa).

Histidine 67 serves as a coordination point for Zn(2+). Aspartate 69 is a catalytic residue. Zn(2+) is bound at residue aspartate 100. The active-site Proton acceptor is the glutamate 134. Glutamate 135, glutamate 163, and histidine 349 together coordinate Zn(2+).

It belongs to the peptidase M20A family. DapE subfamily. Homodimer. Zn(2+) serves as cofactor. Requires Co(2+) as cofactor.

It catalyses the reaction N-succinyl-(2S,6S)-2,6-diaminopimelate + H2O = (2S,6S)-2,6-diaminopimelate + succinate. Its pathway is amino-acid biosynthesis; L-lysine biosynthesis via DAP pathway; LL-2,6-diaminopimelate from (S)-tetrahydrodipicolinate (succinylase route): step 3/3. Its function is as follows. Catalyzes the hydrolysis of N-succinyl-L,L-diaminopimelic acid (SDAP), forming succinate and LL-2,6-diaminopimelate (DAP), an intermediate involved in the bacterial biosynthesis of lysine and meso-diaminopimelic acid, an essential component of bacterial cell walls. In Actinobacillus pleuropneumoniae serotype 5b (strain L20), this protein is Succinyl-diaminopimelate desuccinylase.